A 545-amino-acid polypeptide reads, in one-letter code: Cytochrome bc1 complex cytochrome b subunit (545 aa).

Residues 54 to 74 (VCLYSFIIIILTGVYLTLFFH) traverse the membrane as a helical segment. Heme is bound by residues His-118 and His-132. 3 helical membrane-spanning segments follow: residues 122 to 142 (ALIF…TGAF), 150 to 170 (WLFG…GYSL), and 182 to 202 (FMEG…FFLF). Heme-binding residues include His-219 and His-234. Helical transmembrane passes span 220-240 (ILLL…LVFY), 269-289 (AGGF…IATI), 335-355 (LVLG…AIAV), 385-405 (FGVA…NDLW), and 413-433 (INAI…VAFI).

This sequence belongs to the cytochrome b family. The cytochrome bc1 complex is composed of a cytochrome b (QcrB), the Rieske iron-sulfur protein (QcrA) and a diheme cytochrome c (QcrC) subunit. It depends on heme as a cofactor.

The protein resides in the cell membrane. It carries out the reaction a quinol + 2 Fe(III)-[cytochrome c](out) = a quinone + 2 Fe(II)-[cytochrome c](out) + 2 H(+)(out). Functionally, cytochrome b subunit of the cytochrome bc1 complex, an essential component of the respiratory electron transport chain required for ATP synthesis. The bc1 complex catalyzes the oxidation of ubiquinol and the reduction of cytochrome c in the respiratory chain. The bc1 complex operates through a Q-cycle mechanism that couples electron transfer to generation of the proton gradient that drives ATP synthesis. The cytochrome b subunit contains two ubiquinol reactive sites: the oxidation (QP) site and the reduction (QN) site. The protein is Cytochrome bc1 complex cytochrome b subunit (qcrB) of Streptomyces coelicolor (strain ATCC BAA-471 / A3(2) / M145).